A 129-amino-acid chain; its full sequence is Follitropin subunit beta (129 aa).

The first 20 residues, 1–20 (MKSVQFCFLFCCWRAICCRS), serve as a signal peptide directing secretion. 6 disulfide bridges follow: cysteine 21-cysteine 69, cysteine 35-cysteine 84, cysteine 38-cysteine 122, cysteine 46-cysteine 100, cysteine 50-cysteine 102, and cysteine 105-cysteine 112. Residues asparagine 25 and asparagine 42 are each glycosylated (N-linked (GlcNAc...) asparagine).

The protein belongs to the glycoprotein hormones subunit beta family. In terms of assembly, heterodimer. The active follitropin is a heterodimer composed of an alpha chain/CGA shared with other hormones and a unique beta chain/FSHB shown here.

It is found in the secreted. Its function is as follows. Together with the alpha chain CGA constitutes follitropin, the follicle-stimulating hormone, and provides its biological specificity to the hormone heterodimer. Binds FSHR, a G protein-coupled receptor, on target cells to activate downstream signaling pathways. Follitropin is involved in follicle development and spermatogenesis in reproductive organs. The sequence is that of Follitropin subunit beta (FSHB) from Bubalus bubalis (Domestic water buffalo).